Consider the following 1118-residue polypeptide: Sodium-driven chloride bicarbonate exchanger (1118 aa).

Disordered stretches follow at residues 1–23 (MEIKDQGAQMEPLLPTRNDEEAV) and 58–97 (GRKSHRRHRHRGHKHRKRDRERDSGLEDGRESPSFDTPSQ). Residues 1 to 509 (MEIKDQGAQM…DFRDAFSLQC (509 aa)) lie on the Cytoplasmic side of the membrane. Residues 59–76 (RKSHRRHRHRGHKHRKRD) are compositionally biased toward basic residues. Basic and acidic residues predominate over residues 77 to 90 (RERDSGLEDGRESP). Phosphoserine is present on Ser-89. Thr-94 carries the post-translational modification Phosphothreonine. The Zn(2+) site is built by His-221 and His-223. Disordered stretches follow at residues 269–310 (AENK…KGPP) and 457–476 (NGTAAHGEAEPHGGHSGPEL). Phosphoserine is present on Ser-276. The chain crosses the membrane as a helical span at residues 510 to 530 (LASFLFLYCACMSPVITFGGL). The Extracellular portion of the chain corresponds to 531-538 (LGEATEGR). A helical membrane pass occupies residues 539–559 (ISAIESLFGASMTGIAYSLFG). The Cytoplasmic segment spans residues 560-562 (GQP). Residues 563–583 (LTILGSTGPVLVFEKILFKFC) traverse the membrane as a helical segment. Over 584 to 596 (KEYGLSYLSLRAS) the chain is Extracellular. A helical transmembrane segment spans residues 597-617 (IGLWTATLCIILVATDASSLV). The Cytoplasmic segment spans residues 618-626 (CYITRFTEE). A helical transmembrane segment spans residues 627-647 (AFASLICIIFIYEALEKLFEL). The Extracellular segment spans residues 648-720 (SETYPINMHN…VGRACGHGHP (73 aa)). Asn-677, Asn-687, and Asn-697 each carry an N-linked (GlcNAc...) asparagine glycan. The chain crosses the membrane as a helical span at residues 721-741 (YVPDVLFWSVILFFSTVTMSA). The Cytoplasmic segment spans residues 742–762 (TLKQFKTSRYFPTKVRSIVSD). Residues 763–783 (FAVFLTILCMVLIDYAIGIPS) traverse the membrane as a helical segment. Residues 784–809 (PKLQVPSVFKPTRDDRGWFVTPLGPN) lie on the Extracellular side of the membrane. A helical membrane pass occupies residues 810–830 (PWWTIIAAIIPALLCTILIFM). Over 831-855 (DQQITAVIINRKEHKLKKGCGYHLD) the chain is Cytoplasmic. Residues 856–876 (LLMVAVMLGVCSIMGLPWFVA) form a helical membrane-spanning segment. Residues 877 to 912 (ATVLSITHVNSLKLESECSAPGEQPKFLGIREQRVT) are Extracellular-facing. Residues 913–933 (GLMIFILMGSSVFMTSILKFI) form a helical membrane-spanning segment. Residues 934-935 (PM) lie on the Cytoplasmic side of the membrane. The chain crosses the membrane as a helical span at residues 936-956 (PVLYGVFLYMGASSLKGIQLF). Topologically, residues 957-998 (DRIKLFWMPAKHQPDFIYLRHVPLRKVHLFTVIQMSCLGLLW) are extracellular. A helical transmembrane segment spans residues 999 to 1019 (IIKVSRAAIVFPMMVLALVFV). At 1020–1118 (RKLMDFLFTK…SRFPSKSSPS (99 aa)) the chain is on the cytoplasmic side. Ser-1057 and Ser-1085 each carry phosphoserine.

Belongs to the anion exchanger (TC 2.A.31) family. Post-translationally, N-glycosylated. In terms of tissue distribution, in the brain, detected in cerebral cortex, subcortex, cerebellum, hippocampus and medulla (at protein level). In the cerebrum, expressed at high levels throughout the cortex, at lower levels in striatum and not detectable in the corpus callosum (at protein level). In the cerebellum, detected at high levels in the molecular layer but at very low levels in the granular layer (at protein level). In the central nervous system, detected in neurons in the olfactory bulb, cortex and cerebellum (at protein level). Within the hippocampus, abundantly expressed in CA3 pyramidal cells (at protein level). Strongly expressed in the retina with high levels in bipolar and amacrine cells (at protein level). Expressed in the epithelial cells of the choroid plexus. During embryonic development, expressed in neurons of the central nervous system. Also expressed in the peripheral nervous system and in non-neuronal tissues such as the dura and some epithelia including the acid-secreting epithelium of the stomach and the duodenal epithelium. In the embryonic retina, expression is restricted to the neuronal cell layer and the retinal pigment epithelium. As to expression, expressed at high levels in brain and at low levels in the pituitary, testis, kidney and ileum. Also expressed in pancreatic islets.

It localises to the basolateral cell membrane. It is found in the apical cell membrane. The protein resides in the cell projection. Its subcellular location is the dendrite. The protein localises to the axon. It localises to the perikaryon. It is found in the presynapse. The protein resides in the postsynapse. The catalysed reaction is 2 hydrogencarbonate(out) + chloride(in) + Na(+)(out) = 2 hydrogencarbonate(in) + chloride(out) + Na(+)(in). With respect to regulation, zinc-binding negatively regulates its activity. Its function is as follows. Sodium/bicarbonate cotransporter which plays an important role in regulating intracellular pH. Has been shown to act as a sodium/bicarbonate cotransporter in exchange for intracellular chloride. Has also been shown to act as a sodium/biocarbonate cotransporter which is not responsible for net efflux of chloride, with the observed chloride efflux being due to chloride self-exchange. Controls neuronal pH and may contribute to the secretion of cerebrospinal fluid. Acting on presynaptic intracellular pH, it promotes GABA release, reduces the excitability of CA1 pyramidal neurons, and modulates short-term synaptic plasticity. Required in retinal cells to maintain normal pH which is necessary for normal vision. In the kidney, likely to mediate bicarbonate reclamation in the apical membrane of the proximal tubules. Functionally, sodium/bicarbonate cotransporter which mediates cotransport of sodium and bicarbonate in association with an efflux of intracellular chloride. This is Sodium-driven chloride bicarbonate exchanger from Mus musculus (Mouse).